Here is a 330-residue protein sequence, read N- to C-terminus: Glycine betaine/proline betaine-binding periplasmic protein (330 aa).

Residues 1-21 (MRHSVLFATAFATLISTQTFA) form the signal peptide. Residues Trp-86, His-90, and 161-163 (WGC) each bind substrate. Cys-157 and Cys-163 are oxidised to a cystine.

As to quaternary structure, the complex is composed of two ATP-binding proteins (ProV), two transmembrane proteins (ProW) and a solute-binding protein (ProX).

The protein localises to the periplasm. Its function is as follows. Part of the ProU ABC transporter complex involved in glycine betaine and proline betaine uptake. Binds glycine betaine and proline betaine with high affinity. The chain is Glycine betaine/proline betaine-binding periplasmic protein from Escherichia coli (strain K12).